The sequence spans 72 residues: Hydrophobic protein OSR8 (72 aa).

A run of 2 helical transmembrane segments spans residues 9 to 29 and 39 to 59; these read FLEI…RFGC and LLTI…LVAL.

This sequence belongs to the UPF0057 (PMP3) family.

The protein localises to the membrane. This Oryza sativa subsp. japonica (Rice) protein is Hydrophobic protein OSR8 (OSR8).